A 208-amino-acid chain; its full sequence is Large ribosomal subunit protein uL4 (208 aa).

The interval 50 to 83 is disordered; sequence VKTRAEVSGGGRKPWKQKGTGRARQGSIRAPQWK.

This sequence belongs to the universal ribosomal protein uL4 family. In terms of assembly, part of the 50S ribosomal subunit.

One of the primary rRNA binding proteins, this protein initially binds near the 5'-end of the 23S rRNA. It is important during the early stages of 50S assembly. It makes multiple contacts with different domains of the 23S rRNA in the assembled 50S subunit and ribosome. Functionally, forms part of the polypeptide exit tunnel. This chain is Large ribosomal subunit protein uL4, found in Mycoplasma mycoides subsp. mycoides SC (strain CCUG 32753 / NCTC 10114 / PG1).